The sequence spans 230 residues: UPF0173 metal-dependent hydrolase OEOE_1287 (230 aa).

It belongs to the UPF0173 family.

This is UPF0173 metal-dependent hydrolase OEOE_1287 from Oenococcus oeni (strain ATCC BAA-331 / PSU-1).